The primary structure comprises 352 residues: Alanine racemase (352 aa).

The Proton acceptor; specific for D-alanine role is filled by K33. Residue K33 is modified to N6-(pyridoxal phosphate)lysine. Position 129 (R129) interacts with substrate. The Proton acceptor; specific for L-alanine role is filled by Y250. Substrate is bound at residue M298.

It belongs to the alanine racemase family. It depends on pyridoxal 5'-phosphate as a cofactor.

It carries out the reaction L-alanine = D-alanine. It functions in the pathway amino-acid biosynthesis; D-alanine biosynthesis; D-alanine from L-alanine: step 1/1. Functionally, catalyzes the interconversion of L-alanine and D-alanine. May also act on other amino acids. The sequence is that of Alanine racemase (alr) from Neisseria meningitidis serogroup B (strain ATCC BAA-335 / MC58).